Reading from the N-terminus, the 156-residue chain is Beta-defensin 125 (156 aa).

The N-terminal stretch at 1 to 20 (MNILMLTFIICGLLTRVTKG) is a signal peptide. 3 disulfide bridges follow: C27–C55, C35–C49, and C39–C56. Positions 68–156 (PAFPVIHLED…PPSQTALTHN (89 aa)) are excised as a propeptide. Residues 108 to 156 (GETMTPETNTPETTMPPSEATTPETTMPPSETATSETMPPPSQTALTHN) form a disordered region. The segment covering 109 to 144 (ETMTPETNTPETTMPPSEATTPETTMPPSETATSET) has biased composition (low complexity).

It belongs to the beta-defensin family.

It is found in the secreted. Has antibacterial activity. The protein is Beta-defensin 125 (DEFB125) of Homo sapiens (Human).